The chain runs to 93 residues: Stromal cell-derived factor 1 (93 aa).

The signal sequence occupies residues 1–21 (MDIRTLALFSILLGSLCLSEG). The short motif at 22–23 (KP) is the Receptor activation motif element. The tract at residues 29-33 (RCPCR) is receptor and heparin binding. Intrachain disulfides connect cysteine 30-cysteine 55 and cysteine 32-cysteine 71. Heparin is bound by residues 41–51 (KSNIKHLKILS), arginine 62, glutamine 69, and lysine 85. Receptor binding stretches follow at residues 48–50 (KIL) and 60–64 (VARLK).

Belongs to the intercrine alpha (chemokine CxC) family. As to quaternary structure, monomer or homodimer; in equilibrium. Dimer formation is induced by non acidic pH and the presence of multivalent anions, and by binding to cxcr4 or heparin.

The protein resides in the secreted. Its function is as follows. Chemoattractant. Activates the C-X-C chemokine receptor cxcr4 to induce a rapid and transient rise in the level of intracellular calcium ions, and chemotaxis. Signaling with cxcr4 mediates the directional movement of mesodermal cells during gastrulation. Binds to the allosteric site (site 2) of integrins and activates them in a cxcr4-independent manner. The protein is Stromal cell-derived factor 1 of Xenopus tropicalis (Western clawed frog).